The primary structure comprises 412 residues: Histone-lysine N-methyltransferase SUV39H1 (412 aa).

Residues 1-89 form an interaction with SIRT1 region; sequence MAENLKGCSV…LKCVRILKQF (89 aa). In terms of domain architecture, Chromo spans 43-101; it reads FEVEYLCDYKKIREQEYYLVKWRGYPDSESTWEPRQNLKCVRILKQFHKDLERELLRRH. The region spanning 179 to 240 is the Pre-SET domain; sequence VGCECQDCLW…DCPNRVVQKG (62 aa). 9 residues coordinate Zn(2+): C181, C183, C186, C194, C195, C222, C226, C228, and C232. Positions 243–366 constitute an SET domain; sequence YDLCIFRTDD…AGEELTFDYN (124 aa). 254 to 256 is a binding site for S-adenosyl-L-methionine; that stretch reads RGW. A mediates interaction with MECOM region spans residues 255 to 377; that stretch reads GWGVRTLEKI…QVDPVDMEST (123 aa). At K266 the chain carries N6-acetyllysine. Residues Y297 and 323 to 324 contribute to the S-adenosyl-L-methionine site; that span reads NH. A Zn(2+)-binding site is contributed by C326. A Phosphoserine modification is found at S391. The region spanning 396–412 is the Post-SET domain; that stretch reads VRIECKCGTESCRKYLF. C400, C402, and C407 together coordinate Zn(2+).

This sequence belongs to the class V-like SAM-binding methyltransferase superfamily. Histone-lysine methyltransferase family. Suvar3-9 subfamily. As to quaternary structure, interacts with H3 and H4 histones. Interacts with GFI1B, DNMT3B, CBX1, CBX4, CCAR2, MBD1, RUNX1, RUNX3, MYOD1, SMAD5 and RB1. Interacts with SBF1 through the SET domain. Interacts with HDAC1 and HDAC2 through the N-terminus and associates with the core histone deacetylase complex composed of HDAC1, HDAC2, RBBP4 and RBBP7. Component of the eNoSC complex, composed of SIRT1, SUV39H1 and RRP8. Interacts (via SET domain) with MECOM; enhances MECOM transcriptional repression activity. Interacts with LMNA; the interaction increases stability of SUV39H1. The large PER complex involved in the histone methylation is composed of at least PER2, CBX3, TRIM28, SUV39H1 and/or SUV39H2; CBX3 mediates the formation of the complex. In terms of assembly, (Microbial infection) Interacts with HTLV-1 Tax protein, leading to abrogate Tax transactivation of HTLV-1 LTR. In terms of processing, phosphorylated on serine residues, and to a lesser degree, on threonine residues. The phosphorylated form is stabilized by SBF1 and is less active in its transcriptional repressor function. Ubiquitinated by the DCX(DCAF13) E3 ubiquitin ligase complex, leading to its degradation. Post-translationally, acetylated at Lys-266, leading to inhibition of enzyme activity. SIRT1-mediated deacetylation relieves this inhibition. In terms of processing, (Microbial infection) A higher molecular weight form is also seen in M.bovis infected cells.

Its subcellular location is the nucleus. It is found in the nucleus lamina. The protein resides in the nucleoplasm. It localises to the chromosome. The protein localises to the centromere. Its subcellular location is the cytoplasmic vesicle. It is found in the phagosome lumen. The protein resides in the cell membrane. The enzyme catalyses L-lysyl(9)-[histone H3] + 3 S-adenosyl-L-methionine = N(6),N(6),N(6)-trimethyl-L-lysyl(9)-[histone H3] + 3 S-adenosyl-L-homocysteine + 3 H(+). Inhibited by S-adenosyl-L-homocysteine. Negatively regulated by CCAR2. Functionally, histone methyltransferase that specifically trimethylates 'Lys-9' of histone H3 using monomethylated H3 'Lys-9' as substrate. Also weakly methylates histone H1 (in vitro). H3 'Lys-9' trimethylation represents a specific tag for epigenetic transcriptional repression by recruiting HP1 (CBX1, CBX3 and/or CBX5) proteins to methylated histones. Mainly functions in heterochromatin regions, thereby playing a central role in the establishment of constitutive heterochromatin at pericentric and telomere regions. H3 'Lys-9' trimethylation is also required to direct DNA methylation at pericentric repeats. SUV39H1 is targeted to histone H3 via its interaction with RB1 and is involved in many processes, such as repression of MYOD1-stimulated differentiation, regulation of the control switch for exiting the cell cycle and entering differentiation, repression by the PML-RARA fusion protein, BMP-induced repression, repression of switch recombination to IgA and regulation of telomere length. Component of the eNoSC (energy-dependent nucleolar silencing) complex, a complex that mediates silencing of rDNA in response to intracellular energy status and acts by recruiting histone-modifying enzymes. The eNoSC complex is able to sense the energy status of cell: upon glucose starvation, elevation of NAD(+)/NADP(+) ratio activates SIRT1, leading to histone H3 deacetylation followed by dimethylation of H3 at 'Lys-9' (H3K9me2) by SUV39H1 and the formation of silent chromatin in the rDNA locus. Recruited by the large PER complex to the E-box elements of the circadian target genes such as PER2 itself or PER1, contributes to the conversion of local chromatin to a heterochromatin-like repressive state through H3 'Lys-9' trimethylation. Its function is as follows. (Microbial infection) Plays a role in defense against mycobacterial infections. Methylates M.tuberculosis HupB on 'Lys-140', probably methylates HupB of M.bovis also. Methylation has an inhibitory effect on mycobacterial growth in the host. Macrophages expressing about 60% SUV39H1 are slightly more susceptible to M.bovis or M.tuberculosis infection. Chaetocin (an inhibitor of this enzyme) increases macrophage survival of M.tuberculosis. This protein inhibits biofilm formation by M.tuberculosis via 'Lys-140' trimethylation. The polypeptide is Histone-lysine N-methyltransferase SUV39H1 (SUV39H1) (Homo sapiens (Human)).